The sequence spans 493 residues: Hexokinase (493 aa).

Positions 27–481 (EELSWRINKF…SGKGAAITAA (455 aa)) constitute a Hexokinase domain. The hexokinase small subdomain stretch occupies residues 91–239 (TGQEKGTYYA…AIPAKVCCVL (149 aa)). ATP is bound at residue 102-107 (DFGGTN). The glucose-binding stretch occupies residues 177 to 203 (SVGFTFSFPCTSPSINCSILIDWTKGF). Positions 240-470 (NDAVGTLMSC…ENLIIIPADD (231 aa)) are hexokinase large subdomain.

It belongs to the hexokinase family.

It catalyses the reaction a D-hexose + ATP = a D-hexose 6-phosphate + ADP + H(+). The enzyme catalyses D-mannose + ATP = D-mannose 6-phosphate + ADP + H(+). The catalysed reaction is D-fructose + ATP = D-fructose 6-phosphate + ADP + H(+). It carries out the reaction D-glucose + ATP = D-glucose 6-phosphate + ADP + H(+). Its pathway is carbohydrate metabolism; hexose metabolism. The protein operates within carbohydrate degradation; glycolysis; D-glyceraldehyde 3-phosphate and glycerone phosphate from D-glucose: step 1/4. Its function is as follows. Catalyzes the phosphorylation of various hexoses to hexose 6-phosphate. The sequence is that of Hexokinase (HK) from Plasmodium falciparum.